Reading from the N-terminus, the 142-residue chain is Large ribosomal subunit protein uL13 (142 aa).

It belongs to the universal ribosomal protein uL13 family. As to quaternary structure, part of the 50S ribosomal subunit.

Its function is as follows. This protein is one of the early assembly proteins of the 50S ribosomal subunit, although it is not seen to bind rRNA by itself. It is important during the early stages of 50S assembly. The polypeptide is Large ribosomal subunit protein uL13 (Pseudomonas paraeruginosa (strain DSM 24068 / PA7) (Pseudomonas aeruginosa (strain PA7))).